Reading from the N-terminus, the 524-residue chain is Excitatory amino acid transporter 3 (524 aa).

Residues Met-1 to Asn-18 lie on the Cytoplasmic side of the membrane. A helical membrane pass occupies residues Trp-19–Val-38. The Extracellular portion of the chain corresponds to Arg-39–Arg-61. Asn-43 carries an N-linked (GlcNAc...) asparagine glycan. A helical membrane pass occupies residues Met-62–Leu-82. At Asp-83–Arg-93 the chain is on the cytoplasmic side. Residues Ala-94–Val-114 form a helical membrane-spanning segment. The Na(+) site is built by Tyr-98, Thr-101, and Thr-102. Topologically, residues Ser-115–Met-205 are extracellular. N-linked (GlcNAc...) asparagine glycosylation is found at Asn-178 and Asn-195. A helical membrane pass occupies residues Tyr-206–Met-229. Residues Gly-230–Asp-238 are Cytoplasmic-facing. A helical transmembrane segment spans residues Phe-239 to Ile-266. At Ala-267–Met-286 the chain is on the extracellular side. Residues Ala-287 to Val-308 traverse the membrane as a helical segment. Residues Val-309–Pro-313 are Cytoplasmic-facing. Residues Phe-314–Ala-344 constitute an intramembrane region (discontinuously helical). L-aspartate-binding residues include Ser-331 and Ser-333. The Cytoplasmic portion of the chain corresponds to Glu-345–Arg-353. The helical transmembrane segment at Ile-354–Phe-380 threads the bilayer. Gly-362, Thr-364, Asn-366, and Asp-368 together coordinate Na(+). Thr-370 contacts L-aspartate. Residues Ile-381 to Gln-393 lie on the Extracellular side of the membrane. The discontinuously helical intramembrane region spans Ile-394–Gly-427. Ser-405, Ile-406, and Ala-408 together coordinate Na(+). Val-411 provides a ligand contact to L-aspartate. Residues Leu-428 to Asp-440 lie on the Extracellular side of the membrane. Residues Trp-441–Val-462 traverse the membrane as a helical segment. Positions 447, 448, and 451 each coordinate L-aspartate. Na(+) is bound by residues Asn-451 and Asp-455. The Cytoplasmic segment spans residues Glu-463–Phe-524. A phosphoserine mark is found at Ser-517 and Ser-522.

It belongs to the dicarboxylate/amino acid:cation symporter (DAACS) (TC 2.A.23) family. SLC1A1 subfamily. Homotrimer. Interacts with ARL6IP5. Interacts with RTN2 (via N-terminus); the interaction promotes cell surface expression of SLC1A1. Interacts with SORCS2; this interaction is important for normal expression at the cell membrane. Glycosylated. As to expression, expressed in all tissues tested including liver, muscle, testis, ovary, retinoblastoma cell line, neurons and brain (in which there was dense expression in substantia nigra, red nucleus, hippocampus and in cerebral cortical layers).

The protein localises to the cell membrane. It is found in the apical cell membrane. Its subcellular location is the synapse. It localises to the synaptosome. The protein resides in the early endosome membrane. The protein localises to the late endosome membrane. It is found in the recycling endosome membrane. The catalysed reaction is K(+)(in) + L-glutamate(out) + 3 Na(+)(out) + H(+)(out) = K(+)(out) + L-glutamate(in) + 3 Na(+)(in) + H(+)(in). It catalyses the reaction K(+)(in) + L-aspartate(out) + 3 Na(+)(out) + H(+)(out) = K(+)(out) + L-aspartate(in) + 3 Na(+)(in) + H(+)(in). The enzyme catalyses D-aspartate(out) + K(+)(in) + 3 Na(+)(out) + H(+)(out) = D-aspartate(in) + K(+)(out) + 3 Na(+)(in) + H(+)(in). It carries out the reaction K(+)(in) + L-cysteine(out) + 3 Na(+)(out) + H(+)(out) = K(+)(out) + L-cysteine(in) + 3 Na(+)(in) + H(+)(in). Functionally, sodium-dependent, high-affinity amino acid transporter that mediates the uptake of L-glutamate and also L-aspartate and D-aspartate. Can also transport L-cysteine. Functions as a symporter that transports one amino acid molecule together with two or three Na(+) ions and one proton, in parallel with the counter-transport of one K(+) ion. Mediates Cl(-) flux that is not coupled to amino acid transport; this avoids the accumulation of negative charges due to aspartate and Na(+) symport. Plays an important role in L-glutamate and L-aspartate reabsorption in renal tubuli. Plays a redundant role in the rapid removal of released glutamate from the synaptic cleft, which is essential for terminating the postsynaptic action of glutamate. Contributes to glutathione biosynthesis and protection against oxidative stress via its role in L-glutamate and L-cysteine transport. Negatively regulated by ARL6IP5. The chain is Excitatory amino acid transporter 3 from Homo sapiens (Human).